The chain runs to 599 residues: MKNIRNFSIIAHIDHGKSTLSDRIIQICGGLSDREMEAQVLDSMDLERERGITIKAQSVTLDYKASDGETYQLNFIDTPGHVDFSYEVSRSLAACEGALLVVDAGQGVEAQTLANCYTAMEMDLEVVPVLNKIDLPAADPERVAEEIEDIVGIDATEAVRCSAKTGVGVQDVLERLVRDIPPPEGDPEGPLQALIIDSWFDNYLGVVSLIRIKNGTLRKGDKVKVMSTGQTYNADRLGIFTPKQVDRTELKCGEVGWLVCAIKDIHGAPVGDTLTLARNPAEKALPGFKKVKPQVYAGLFPVSSDDYEAFRDALGKLSLNDASLFYEPESSSALGFGFRCGFLGLLHMEIIQERLEREYDLDLITTAPTVVYEVETTSREVIYVDSPSKLPAVNNIYELREPIAECHMLLPQAYLGNVITLCVEKRGVQTNMVYHGNQVALTYEIPMAEVVLDFFDRLKSTSRGYASLDYNFKRFQASDMVRVDVLINGERVDALALITHRDNSQNRGRELVEKMKDLIPRQQFDIAIQAAIGTHIIARSTVKQLRKNVLAKCYGGDISRKKKLLQKQKEGKKRMKQIGNVELPQEAFLAILHVGKDNK.

One can recognise a tr-type G domain in the interval 2-184 (KNIRNFSIIA…RLVRDIPPPE (183 aa)). GTP is bound by residues 14–19 (DHGKST) and 131–134 (NKID).

Belongs to the TRAFAC class translation factor GTPase superfamily. Classic translation factor GTPase family. LepA subfamily.

The protein localises to the cell inner membrane. The catalysed reaction is GTP + H2O = GDP + phosphate + H(+). Functionally, required for accurate and efficient protein synthesis under certain stress conditions. May act as a fidelity factor of the translation reaction, by catalyzing a one-codon backward translocation of tRNAs on improperly translocated ribosomes. Back-translocation proceeds from a post-translocation (POST) complex to a pre-translocation (PRE) complex, thus giving elongation factor G a second chance to translocate the tRNAs correctly. Binds to ribosomes in a GTP-dependent manner. In Escherichia coli O8 (strain IAI1), this protein is Elongation factor 4.